We begin with the raw amino-acid sequence, 252 residues long: tRNA pseudouridine synthase A (252 aa).

Asp52 (nucleophile) is an active-site residue. Residue Tyr111 coordinates substrate.

This sequence belongs to the tRNA pseudouridine synthase TruA family. As to quaternary structure, homodimer.

It catalyses the reaction uridine(38/39/40) in tRNA = pseudouridine(38/39/40) in tRNA. In terms of biological role, formation of pseudouridine at positions 38, 39 and 40 in the anticodon stem and loop of transfer RNAs. The protein is tRNA pseudouridine synthase A of Methylorubrum populi (strain ATCC BAA-705 / NCIMB 13946 / BJ001) (Methylobacterium populi).